The sequence spans 156 residues: Small ribosomal subunit protein uS7 (156 aa).

Belongs to the universal ribosomal protein uS7 family. As to quaternary structure, part of the 30S ribosomal subunit. Contacts proteins S9 and S11.

Functionally, one of the primary rRNA binding proteins, it binds directly to 16S rRNA where it nucleates assembly of the head domain of the 30S subunit. Is located at the subunit interface close to the decoding center, probably blocks exit of the E-site tRNA. The chain is Small ribosomal subunit protein uS7 from Maridesulfovibrio salexigens (strain ATCC 14822 / DSM 2638 / NCIMB 8403 / VKM B-1763) (Desulfovibrio salexigens).